The primary structure comprises 111 residues: Universal stress protein B (111 aa).

Helical transmembrane passes span 1–21 (MIST…NMAR) and 90–110 (FILT…LMIW).

The protein belongs to the universal stress protein B family.

Its subcellular location is the cell inner membrane. The chain is Universal stress protein B from Cronobacter sakazakii (strain ATCC BAA-894) (Enterobacter sakazakii).